The primary structure comprises 50 residues: Sperm protamine P1 (50 aa).

The protein belongs to the protamine P1 family. As to expression, testis.

Its subcellular location is the nucleus. It localises to the chromosome. Protamines substitute for histones in the chromatin of sperm during the haploid phase of spermatogenesis. They compact sperm DNA into a highly condensed, stable and inactive complex. The chain is Sperm protamine P1 (PRM1) from Trachypithecus phayrei (Phayre's leaf monkey).